The chain runs to 702 residues: Transposon Tn7 transposition protein TnsB (702 aa).

A DNA-binding domain 1 (DBD1) region spans residues 1–139; it reads MWQINEVVLF…GQTPNALIPD (139 aa). Residues 105 to 124 constitute a DNA-binding region (H-T-H motif); the sequence is VEHVVQEHKVTKATVYKLLR. Residues 137–160 form a disordered region; that stretch reads IPDYKNSGAPGERRSATGTAKIGR. The segment at 140–172 is linker 1; sequence YKNSGAPGERRSATGTAKIGRAREYGKGEGTKV. The interval 173–233 is DNA-binding domain 2 (DBD2); sequence TPEIERLFRL…QFRYFYDREY (61 aa). Residues 234-267 form a linker 2 region; the sequence is PKAQRLKSRVKAGVYKKDVRPLSSTATSQALGPG. The region spanning 262–480 is the Integrase catalytic domain; the sequence is QALGPGSRYE…IPVQLWQWGM (219 aa). A catalytic domain (CD) region spans residues 268–582; the sequence is SRYEIDATIA…RSRQFKGLSF (315 aa). Residues 589-702 are C-terminal domain; it reads QAQEKHNKAN…FQDPPEKDES (114 aa). Residues 623-702 are disordered; sequence KLTPSTTEPK…FQDPPEKDES (80 aa).

In terms of assembly, heteromer with TnsA.

In terms of biological role, sequence-specific, DNA-binding protein required for Tn7 transposition. Recognizes sequences necessary for recombination at both left and right ends of Tn7 and, together with TnsA, forms the transposase. TnsB executes the 3'-DNA strand breakage and joining reactions. TnsB binding introduces DNA bending. There are 3 DNA-binding sites in the left and 4 in the right end of Tn7; as TnsB levels increase more TnsB is bound, suggesting high protein levels contribute to transposon immunity. Binding of TnsB to the transposon right end represses expression of the downstream transposition genes. TnsABC + TnsD promote high-frequency insertion of Tn7 into a specific target site known as att-Tn7 whereas TnsABC + TnsE promote low-frequency insertion into many different sites. This is Transposon Tn7 transposition protein TnsB from Escherichia coli.